Consider the following 832-residue polypeptide: Conserved oligomeric Golgi complex subunit 5 (832 aa).

2 stretches are compositionally biased toward pro residues: residues M1–S11 and N23–T38. Residues M1–S49 are disordered. Residues P39–S49 are compositionally biased toward low complexity.

This sequence belongs to the COG5 family. Homodimer. Component of the conserved oligomeric Golgi complex which is composed of eight different subunits and is required for normal Golgi morphology and localization. Interacts with COG3, COG6, COG7 and COG8.

Its subcellular location is the golgi apparatus membrane. Functionally, required for normal Golgi function. The polypeptide is Conserved oligomeric Golgi complex subunit 5 (Arabidopsis thaliana (Mouse-ear cress)).